A 318-amino-acid chain; its full sequence is L-malyl-CoA/beta-methylmalyl-CoA lyase (318 aa).

Positions 19, 24, 30, and 76 each coordinate substrate. Residues glutamate 141 and aspartate 168 each contribute to the Mg(2+) site. Residues 167–168 and 251–252 contribute to the substrate site; these read AD and IH.

Belongs to the HpcH/HpaI aldolase family. As to quaternary structure, homohexamer. Dimer of trimers. Mg(2+) serves as cofactor. Requires Mn(2+) as cofactor.

It catalyses the reaction (S)-malyl-CoA = glyoxylate + acetyl-CoA. The catalysed reaction is (2R,3S)-beta-methylmalyl-CoA = propanoyl-CoA + glyoxylate. With respect to regulation, in vitro inhibited by EDTA. Involved in the ethylmalonyl-CoA pathway for acetate assimilation. Catalyzes the reversible condensation of glyoxylate and acetyl-CoA to L-malyl-CoA and the reversible condensation of glyoxylate and propionyl-CoA to beta-methylmalyl-CoA. This chain is L-malyl-CoA/beta-methylmalyl-CoA lyase, found in Rhodobacter capsulatus (Rhodopseudomonas capsulata).